Consider the following 1076-residue polypeptide: Isoleucine--tRNA ligase (1076 aa).

A 'HIGH' region motif is present at residues Pro-47–Thr-57. The short motif at Lys-591–Ser-595 is the 'KMSKS' region element. Residue Lys-594 coordinates ATP.

Belongs to the class-I aminoacyl-tRNA synthetase family. IleS type 2 subfamily. As to quaternary structure, monomer. It depends on Zn(2+) as a cofactor.

It localises to the cytoplasm. The enzyme catalyses tRNA(Ile) + L-isoleucine + ATP = L-isoleucyl-tRNA(Ile) + AMP + diphosphate. Its function is as follows. Catalyzes the attachment of isoleucine to tRNA(Ile). As IleRS can inadvertently accommodate and process structurally similar amino acids such as valine, to avoid such errors it has two additional distinct tRNA(Ile)-dependent editing activities. One activity is designated as 'pretransfer' editing and involves the hydrolysis of activated Val-AMP. The other activity is designated 'posttransfer' editing and involves deacylation of mischarged Val-tRNA(Ile). This is Isoleucine--tRNA ligase from Methanoregula boonei (strain DSM 21154 / JCM 14090 / 6A8).